A 264-amino-acid polypeptide reads, in one-letter code: B3-hordein (264 aa).

Positions 1 to 15 (QQPVSRQPQQIIPQQ) are enriched in low complexity. The disordered stretch occupies residues 1-66 (QQPVSRQPQQ…QQPFPQQPPF (66 aa)). Pro residues-rich tracts occupy residues 16–44 (PQQPFPLQPQQPQPFPQQPIPQQPQPYPQ) and 52–64 (QPFPSQQPFPQQP).

This sequence belongs to the gliadin/glutenin family. In terms of tissue distribution, developing endosperm.

In terms of biological role, sulfur-rich seed storage protein. The chain is B3-hordein from Hordeum vulgare (Barley).